Reading from the N-terminus, the 380-residue chain is 3-methylitaconate isomerase (380 aa).

It belongs to the PrpF family. Homotetramer.

The enzyme catalyses 2-methylene-3-methylsuccinate = dimethylmaleate. It participates in cofactor degradation; nicotinate degradation; propanoate and pyruvate from 6-hydroxynicotinate: step 6/8. Its activity is regulated as follows. Inhibited by oxidized glutathione, p-chloromercuriphenylsulfonic acid and iodoacetic acid. Not inhibited by the chelating agent alpha,alpha-dipyridyl. Activity is slightly increased by EDTA. Not activated by Fe(2+), Mg(2+), Mn(2+) or Ca(2+). Unaffected by K(+), Na(+), NH4(+), Rb(+) or Li(+). Its function is as follows. Catalyzes the reversible isomerization of (R)-3-methylitaconate to 2,3-dimethylmaleate. Has very low isomerase activity with itaconate. In Eubacterium barkeri (Clostridium barkeri), this protein is 3-methylitaconate isomerase (mii).